A 124-amino-acid chain; its full sequence is Small ribosomal subunit protein uS12 (124 aa).

Aspartate 89 bears the 3-methylthioaspartic acid mark.

Belongs to the universal ribosomal protein uS12 family. In terms of assembly, part of the 30S ribosomal subunit. Contacts proteins S8 and S17. May interact with IF1 in the 30S initiation complex.

Functionally, with S4 and S5 plays an important role in translational accuracy. In terms of biological role, interacts with and stabilizes bases of the 16S rRNA that are involved in tRNA selection in the A site and with the mRNA backbone. Located at the interface of the 30S and 50S subunits, it traverses the body of the 30S subunit contacting proteins on the other side and probably holding the rRNA structure together. The combined cluster of proteins S8, S12 and S17 appears to hold together the shoulder and platform of the 30S subunit. The polypeptide is Small ribosomal subunit protein uS12 (Yersinia enterocolitica serotype O:8 / biotype 1B (strain NCTC 13174 / 8081)).